The primary structure comprises 430 residues: 3-phosphoshikimate 1-carboxyvinyltransferase (430 aa).

The 3-phosphoshikimate site is built by Lys23, Ser24, and Arg28. Residue Lys23 participates in phosphoenolpyruvate binding. Residues Gly95 and Arg123 each contribute to the phosphoenolpyruvate site. Ser169, Gln171, Asp315, and Lys342 together coordinate 3-phosphoshikimate. Phosphoenolpyruvate is bound at residue Gln171. The active-site Proton acceptor is Asp315. Arg346 and Arg388 together coordinate phosphoenolpyruvate.

It belongs to the EPSP synthase family. In terms of assembly, monomer.

The protein resides in the cytoplasm. The enzyme catalyses 3-phosphoshikimate + phosphoenolpyruvate = 5-O-(1-carboxyvinyl)-3-phosphoshikimate + phosphate. It functions in the pathway metabolic intermediate biosynthesis; chorismate biosynthesis; chorismate from D-erythrose 4-phosphate and phosphoenolpyruvate: step 6/7. Catalyzes the transfer of the enolpyruvyl moiety of phosphoenolpyruvate (PEP) to the 5-hydroxyl of shikimate-3-phosphate (S3P) to produce enolpyruvyl shikimate-3-phosphate and inorganic phosphate. The polypeptide is 3-phosphoshikimate 1-carboxyvinyltransferase (Streptococcus pyogenes serotype M1).